A 449-amino-acid polypeptide reads, in one-letter code: Phosphoglucosamine mutase (449 aa).

Ser-104 acts as the Phosphoserine intermediate in catalysis. The Mg(2+) site is built by Ser-104, Asp-243, Asp-245, and Asp-247. At Ser-104 the chain carries Phosphoserine.

The protein belongs to the phosphohexose mutase family. The cofactor is Mg(2+). Post-translationally, activated by phosphorylation.

The catalysed reaction is alpha-D-glucosamine 1-phosphate = D-glucosamine 6-phosphate. In terms of biological role, catalyzes the conversion of glucosamine-6-phosphate to glucosamine-1-phosphate. This is Phosphoglucosamine mutase from Xanthomonas oryzae pv. oryzae (strain PXO99A).